Reading from the N-terminus, the 36-residue chain is DNA binding protein ORF8 (36 aa).

This sequence belongs to the microviridae J protein family.

Its subcellular location is the virion. It is found in the host cytoplasm. Its function is as follows. Mediates ssDNA packaging into virion, it locates to the internal surface of the capsid. Additionally, plays a role in viral attachment to the host cell. The chain is DNA binding protein ORF8 from Chlamydia phage 1 (Bacteriophage Chp1).